The chain runs to 637 residues: DNA gyrase subunit B (637 aa).

A Toprim domain is found at 422–536; that stretch reads CEVYIVEGDS…AGYVYLAMPP (115 aa). Glu-428, Asp-501, and Asp-503 together coordinate Mg(2+).

It belongs to the type II topoisomerase GyrB family. Heterotetramer, composed of two GyrA and two GyrB chains. In the heterotetramer, GyrA contains the active site tyrosine that forms a transient covalent intermediate with DNA, while GyrB binds cofactors and catalyzes ATP hydrolysis. The cofactor is Mg(2+). Requires Mn(2+) as cofactor. Ca(2+) is required as a cofactor.

It localises to the cytoplasm. The catalysed reaction is ATP-dependent breakage, passage and rejoining of double-stranded DNA.. A type II topoisomerase that negatively supercoils closed circular double-stranded (ds) DNA in an ATP-dependent manner to modulate DNA topology and maintain chromosomes in an underwound state. Negative supercoiling favors strand separation, and DNA replication, transcription, recombination and repair, all of which involve strand separation. Also able to catalyze the interconversion of other topological isomers of dsDNA rings, including catenanes and knotted rings. Type II topoisomerases break and join 2 DNA strands simultaneously in an ATP-dependent manner. The chain is DNA gyrase subunit B from Treponema pallidum (strain Nichols).